We begin with the raw amino-acid sequence, 240 residues long: Carboxy-S-adenosyl-L-methionine synthase (240 aa).

Residues Tyr35, 61–63 (GCS), 86–87 (DN), 112–113 (DI), and Arg194 contribute to the S-adenosyl-L-methionine site.

Belongs to the class I-like SAM-binding methyltransferase superfamily. Cx-SAM synthase family. As to quaternary structure, homodimer.

The catalysed reaction is prephenate + S-adenosyl-L-methionine = carboxy-S-adenosyl-L-methionine + 3-phenylpyruvate + H2O. Catalyzes the conversion of S-adenosyl-L-methionine (SAM) to carboxy-S-adenosyl-L-methionine (Cx-SAM). The protein is Carboxy-S-adenosyl-L-methionine synthase of Wolinella succinogenes (strain ATCC 29543 / DSM 1740 / CCUG 13145 / JCM 31913 / LMG 7466 / NCTC 11488 / FDC 602W) (Vibrio succinogenes).